A 121-amino-acid polypeptide reads, in one-letter code: Small ribosomal subunit protein uS13 (121 aa).

Residues 92–121 (RKGLPMRGQRTRTNARTRKGPRRAAQALKK) are disordered.

The protein belongs to the universal ribosomal protein uS13 family. As to quaternary structure, part of the 30S ribosomal subunit. Forms a loose heterodimer with protein S19. Forms two bridges to the 50S subunit in the 70S ribosome.

Its function is as follows. Located at the top of the head of the 30S subunit, it contacts several helices of the 16S rRNA. In the 70S ribosome it contacts the 23S rRNA (bridge B1a) and protein L5 of the 50S subunit (bridge B1b), connecting the 2 subunits; these bridges are implicated in subunit movement. Contacts the tRNAs in the A and P-sites. In Burkholderia thailandensis (strain ATCC 700388 / DSM 13276 / CCUG 48851 / CIP 106301 / E264), this protein is Small ribosomal subunit protein uS13.